The primary structure comprises 130 residues: Astrocytic phosphoprotein PEA-15 (130 aa).

Residues 3–81 (EYGTLLQDLT…RPDLLTMVVD (79 aa)) enclose the DED domain. Ser61, Ser90, Ser104, and Ser116 each carry phosphoserine. A microtubule-binding region spans residues 98–107 (KLTRIPSAKK). The segment at 122–129 (KLAPPPKK) is microtubule-binding.

Binds RPS6KA3, MAPK3 and MAPK1. Transient interaction with PLD1 and PLD2. Interacts with CASP8 and FADD. In terms of processing, phosphorylated by protein kinase C and calcium-calmodulin-dependent protein kinase. These phosphorylation events are modulated by neurotransmitters or hormones. Ubiquitously expressed. Most abundant in tissues such as heart, brain, muscle and adipose tissue which utilize glucose as an energy source. Lower expression in glucose-producing tissues. Higher levels of expression are found in tissues from individuals with type 2 diabetes than in controls.

It is found in the cytoplasm. Functionally, blocks Ras-mediated inhibition of integrin activation and modulates the ERK MAP kinase cascade. Inhibits RPS6KA3 activities by retaining it in the cytoplasm. Inhibits both TNFRSF6- and TNFRSF1A-mediated CASP8 activity and apoptosis. Regulates glucose transport by controlling both the content of SLC2A1 glucose transporters on the plasma membrane and the insulin-dependent trafficking of SLC2A4 from the cell interior to the surface. The polypeptide is Astrocytic phosphoprotein PEA-15 (PEA15) (Homo sapiens (Human)).